Here is a 126-residue protein sequence, read N- to C-terminus: Small ribosomal subunit protein uS11 (126 aa).

This sequence belongs to the universal ribosomal protein uS11 family. As to quaternary structure, part of the 30S ribosomal subunit. Interacts with proteins S7 and S18. Binds to IF-3.

Located on the platform of the 30S subunit, it bridges several disparate RNA helices of the 16S rRNA. Forms part of the Shine-Dalgarno cleft in the 70S ribosome. This is Small ribosomal subunit protein uS11 from Orientia tsutsugamushi (strain Boryong) (Rickettsia tsutsugamushi).